Consider the following 369-residue polypeptide: Anhydro-N-acetylmuramic acid kinase (369 aa).

12 to 19 (GTSMDGVD) provides a ligand contact to ATP.

Belongs to the anhydro-N-acetylmuramic acid kinase family.

It carries out the reaction 1,6-anhydro-N-acetyl-beta-muramate + ATP + H2O = N-acetyl-D-muramate 6-phosphate + ADP + H(+). The protein operates within amino-sugar metabolism; 1,6-anhydro-N-acetylmuramate degradation. It participates in cell wall biogenesis; peptidoglycan recycling. In terms of biological role, catalyzes the specific phosphorylation of 1,6-anhydro-N-acetylmuramic acid (anhMurNAc) with the simultaneous cleavage of the 1,6-anhydro ring, generating MurNAc-6-P. Is required for the utilization of anhMurNAc either imported from the medium or derived from its own cell wall murein, and thus plays a role in cell wall recycling. The protein is Anhydro-N-acetylmuramic acid kinase of Shewanella oneidensis (strain ATCC 700550 / JCM 31522 / CIP 106686 / LMG 19005 / NCIMB 14063 / MR-1).